The primary structure comprises 362 residues: 3-dehydroquinate synthase (362 aa).

NAD(+) contacts are provided by residues 71-76 (DGEKYK), 105-109 (GVIGD), 129-130 (TT), Lys-142, Lys-151, and 169-172 (CLKT). Zn(2+)-binding residues include Glu-184, His-247, and His-264.

The protein belongs to the sugar phosphate cyclases superfamily. Dehydroquinate synthase family. Co(2+) is required as a cofactor. Zn(2+) serves as cofactor. Requires NAD(+) as cofactor.

It localises to the cytoplasm. It carries out the reaction 7-phospho-2-dehydro-3-deoxy-D-arabino-heptonate = 3-dehydroquinate + phosphate. It functions in the pathway metabolic intermediate biosynthesis; chorismate biosynthesis; chorismate from D-erythrose 4-phosphate and phosphoenolpyruvate: step 2/7. Its function is as follows. Catalyzes the conversion of 3-deoxy-D-arabino-heptulosonate 7-phosphate (DAHP) to dehydroquinate (DHQ). The sequence is that of 3-dehydroquinate synthase from Citrobacter koseri (strain ATCC BAA-895 / CDC 4225-83 / SGSC4696).